The sequence spans 42 residues: Potassium channel toxin gamma-KTx 1.10 (42 aa).

Intrachain disulfides connect C5–C23, C11–C34, C20–C39, and C24–C41.

Expressed by the venom gland.

It is found in the secreted. In terms of biological role, blocks human Kv11.1/KCNH2/ERG1 potassium channels (reversible, IC(50)=3.4 nM). At high toxin concentrations, block of Kv11.1/KCNH2/ERG1 macroscopic current is almost complete. Does not accelerate the kinetics of the closing process and has no effect on the activation and inactivation kinetics of the Kv11.1/KCNH2/ERG1 channels. The chain is Potassium channel toxin gamma-KTx 1.10 from Centruroides margaritatus (Central American bark Scorpion).